The sequence spans 205 residues: Small ribosomal subunit protein uS4 (205 aa).

The segment at asparagine 18–serine 46 is disordered. An S4 RNA-binding domain is found at arginine 94–threonine 157.

It belongs to the universal ribosomal protein uS4 family. As to quaternary structure, part of the 30S ribosomal subunit. Contacts protein S5. The interaction surface between S4 and S5 is involved in control of translational fidelity.

Functionally, one of the primary rRNA binding proteins, it binds directly to 16S rRNA where it nucleates assembly of the body of the 30S subunit. In terms of biological role, with S5 and S12 plays an important role in translational accuracy. This is Small ribosomal subunit protein uS4 from Bradyrhizobium sp. (strain BTAi1 / ATCC BAA-1182).